Consider the following 256-residue polypeptide: MNKETISQIKARLQTITDTTDPYLQTIHDDSRKGVQTAIQQFERRLARQKEAEEAFNNRFKYEKYYWENGCQYIAGMDEVGRGPLAGPVVTCAVILNADFDLIGVTDSKQLTRHERENLYLRIVDEAVEVSIAVNDAPVIDQMNIYAATQDAMIRAVNHLHHRPDHLIVDAVPLAIDIPQTTLIKGDQKSISVAAASIVAKEYRDHLMRDYDYVYPGYGFAQNMGYGTKEHLAGLEKMGATPIHRRSFNPVPKYLN.

The region spanning 72-256 (QYIAGMDEVG…SFNPVPKYLN (185 aa)) is the RNase H type-2 domain. 3 residues coordinate a divalent metal cation: aspartate 78, glutamate 79, and aspartate 170.

The protein belongs to the RNase HII family. Mn(2+) serves as cofactor. It depends on Mg(2+) as a cofactor.

It is found in the cytoplasm. It carries out the reaction Endonucleolytic cleavage to 5'-phosphomonoester.. Endonuclease that specifically degrades the RNA of RNA-DNA hybrids. The chain is Ribonuclease HII from Limosilactobacillus reuteri (strain DSM 20016) (Lactobacillus reuteri).